The chain runs to 500 residues: Toluene-4-monooxygenase system, hydroxylase component subunit alpha (500 aa).

Residues glutamate 104, glutamate 134, histidine 137, glutamate 197, glutamate 231, and histidine 234 each contribute to the Fe cation site.

Belongs to the TmoA/XamoA family. The alkene monooxygenase multicomponent enzyme system is composed of an electron transfer component and a monooxygenase component interacting with the effector protein TmoD. The electron transfer component is composed of a ferredoxin reductase (TmoF) and a ferredoxin (TmoC), and the monooxygenase component is formed by a heterohexamer (dimer of heterotrimers) of two alpha subunits (TmoA), two beta subunits (TmoE) and two gamma subunits (TmoB). It depends on Fe(2+) as a cofactor.

The catalysed reaction is toluene + NADH + O2 + H(+) = 4-methylphenol + NAD(+) + H2O. It participates in xenobiotic degradation; toluene degradation. Inhibited by Zn(2+) and Cu(2+). Functionally, component of the toluene-4-monooxygenase multicomponent enzyme system which catalyzes the O2- and NADH-dependent hydroxylation of toluene to form p-cresol. Also able to convert benzene to phenol, catechol, and 1,2,3-trihydroxybenzene by successive hydroxylations. The sequence is that of Toluene-4-monooxygenase system, hydroxylase component subunit alpha from Ectopseudomonas mendocina (Pseudomonas mendocina).